The primary structure comprises 120 residues: MTRIKRGSIARARRTKIRFFASKFRGSHSRLTRTIIQQGLRAFVSSQRDRHKKKRDFRRLWITRLNAAIRAIGVGYSYSASIHNLYKSQLILNRKILTQIAISNRNCLYMISNEILKSGV.

This sequence belongs to the bacterial ribosomal protein bL20 family.

It is found in the plastid. In terms of biological role, binds directly to 23S ribosomal RNA and is necessary for the in vitro assembly process of the 50S ribosomal subunit. It is not involved in the protein synthesizing functions of that subunit. The polypeptide is Large ribosomal subunit protein bL20c (rpl20) (Cuscuta gronovii (Common dodder)).